A 331-amino-acid polypeptide reads, in one-letter code: Mucin-15 (331 aa).

A signal peptide spans 1 to 22 (MLTLAKIALISSLFISLPFARP). The Extracellular portion of the chain corresponds to 23 to 233 (QKQNPRRNVT…SDTPKENKNT (211 aa)). N-linked (GlcNAc...) asparagine glycosylation is found at asparagine 30, asparagine 44, asparagine 54, asparagine 59, asparagine 75, asparagine 84, asparagine 120, asparagine 136, asparagine 145, asparagine 152, asparagine 215, and asparagine 222. Positions 124-162 (ADANPLQVSEHSNSTNSPSPENFTWSLDNDTMNSPEDIS) are enriched in polar residues. The disordered stretch occupies residues 124–186 (ADANPLQVSE…VTPFTAEPTE (63 aa)). A helical membrane pass occupies residues 234 to 254 (GIVFGAILGAILGASLLSLVG). Over 255–331 (YLLCGQRKTD…DAIPPLRPSI (77 aa)) the chain is Cytoplasmic. Residues 302–331 (AVSDSSMPEGGESLQDGIPMDAIPPLRPSI) are disordered.

Highly glycosylated (N- and O-linked carbohydrates).

The protein localises to the membrane. This is Mucin-15 (Muc15) from Mus musculus (Mouse).